A 415-amino-acid chain; its full sequence is G2/mitotic-specific cyclin cig1 (415 aa).

Disordered stretches follow at residues 54-74 (PTLIEGNNESSISSSTGDTFE) and 86-118 (EERSIRSTPKSIGDDDLENREGSFDAPEGILTH). A compositionally biased stretch (low complexity) spans 57–71 (IEGNNESSISSSTGD). Position 96 is a phosphoserine (serine 96).

The protein belongs to the cyclin family. Cyclin G subfamily.

Its function is as follows. Required for efficient passage of the G1/S transition. The polypeptide is G2/mitotic-specific cyclin cig1 (cig1) (Schizosaccharomyces pombe (strain 972 / ATCC 24843) (Fission yeast)).